Here is a 451-residue protein sequence, read N- to C-terminus: Probable phosphoglucosamine mutase (451 aa).

Ser96 serves as the catalytic Phosphoserine intermediate. 4 residues coordinate Mg(2+): Ser96, Asp233, Asp235, and Asp237. The residue at position 96 (Ser96) is a Phosphoserine.

The protein belongs to the phosphohexose mutase family. It depends on Mg(2+) as a cofactor. Activated by phosphorylation.

It catalyses the reaction alpha-D-glucosamine 1-phosphate = D-glucosamine 6-phosphate. Functionally, catalyzes the conversion of glucosamine-6-phosphate to glucosamine-1-phosphate. The chain is Probable phosphoglucosamine mutase from Pyrococcus horikoshii (strain ATCC 700860 / DSM 12428 / JCM 9974 / NBRC 100139 / OT-3).